A 702-amino-acid chain; its full sequence is Translation factor GUF1 homolog, chloroplastic (702 aa).

Positions 1-30 are enriched in low complexity; sequence MASAAPASRGAARASTAARDAPFAAAARGP. Positions 1-41 are disordered; the sequence is MASAAPASRGAARASTAARDAPFAAAARGPGRFRRDGNGRN. In terms of domain architecture, tr-type G spans 87–283; sequence SQIRNFSIIA…NIVKMIPPPP (197 aa). GTP-binding positions include 96–103, 162–166, and 216–219; these read AHIDHGKS, DTPGH, and NKID.

This sequence belongs to the TRAFAC class translation factor GTPase superfamily. Classic translation factor GTPase family. LepA subfamily.

The protein resides in the plastid. The protein localises to the chloroplast. The enzyme catalyses GTP + H2O = GDP + phosphate + H(+). Its function is as follows. Promotes chloroplast protein synthesis. May act as a fidelity factor of the translation reaction, by catalyzing a one-codon backward translocation of tRNAs on improperly translocated ribosomes. The protein is Translation factor GUF1 homolog, chloroplastic of Micromonas pusilla (strain CCMP1545) (Picoplanktonic green alga).